We begin with the raw amino-acid sequence, 215 residues long: Sodium channel regulatory subunit beta-2 (215 aa).

Residues 1–29 (MHRDAWLPRPAFSLTGLSLFFSLVPSGRS) form the signal peptide. Residues 30–157 (MEVTVPTTLS…LEVPPERDST (128 aa)) lie on the Extracellular side of the membrane. Residues 32 to 154 (VTVPTTLSVL…QVLLEVPPER (123 aa)) enclose the Ig-like C2-type domain. N42, N66, and N74 each carry an N-linked (GlcNAc...) asparagine glycan. Cystine bridges form between C50-C127 and C72-C75. The helical transmembrane segment at 158–179 (VAVIVGASVGGFLAVVILVLMV) threads the bilayer. Over 180-215 (VKCVRRKKEQKLSTDDLKTEEEGKTDGEGNAEDGAK) the chain is Cytoplasmic. The tract at residues 187 to 215 (KEQKLSTDDLKTEEEGKTDGEGNAEDGAK) is disordered. Residues 189–215 (QKLSTDDLKTEEEGKTDGEGNAEDGAK) show a composition bias toward basic and acidic residues. S192 bears the Phosphoserine mark. A Phosphothreonine modification is found at T204.

This sequence belongs to the sodium channel auxiliary subunit SCN2B (TC 8.A.17) family. As to quaternary structure, a voltage-gated sodium (Nav) channel consists of an ion-conducting pore-forming alpha subunit functional on its own that is regulated by one or more beta subunits. The beta subunit SCN2B is disulfide-linked to the pore-forming alpha subunit. Interacts with SCN1A; regulatory subunit of SCN1A/Nav1.1. Interacts with SCN2A; regulatory subunit of SCN2A/Nav1.2. Interacts with SCN3A; regulatory subunit of SCN3A/Nav1.3. Interacts with SCN5A; regulatory subunit of SCN5A/Nav1.5. Interacts with SCN8A; regulatory subunit of SCN8A/Nav1.6. Interacts with SCN9A; regulatory subunit of SCN9A/Nav1.7. Interacts with SCN10A; regulatory subunit of SCN10A/Nav1.8. Interacts with TNR; may play a crucial role in clustering and regulation of activity of SCN2B-containing Nav channels at nodes of Ranvier.

Its subcellular location is the cell membrane. The protein resides in the cell projection. It is found in the axon. Functionally, regulatory subunit of multiple voltage-gated sodium (Nav) channels directly mediating the depolarization of excitable membranes. Navs, also called VGSCs (voltage-gated sodium channels) or VDSCs (voltage-dependent sodium channels), operate by switching between closed and open conformations depending on the voltage difference across the membrane. In the open conformation they allow Na(+) ions to selectively pass through the pore, along their electrochemical gradient. The influx of Na+ ions provokes membrane depolarization, initiating the propagation of electrical signals throughout cells and tissues. The accessory beta subunits participate in localization and functional modulation of the Nav channels. Modulates the activity of SCN1A/Nav1.1, SCN2A/Nav1.2, SCN2A/Nav1.3, SCN5A/Nav1.5, SCN8A/Nav1.6, SCN9A/Nav1.7 and SCN10A/Nav1.8. This chain is Sodium channel regulatory subunit beta-2, found in Rattus norvegicus (Rat).